We begin with the raw amino-acid sequence, 360 residues long: UDP-3-O-acylglucosamine N-acyltransferase (360 aa).

His-256 functions as the Proton acceptor in the catalytic mechanism. The tract at residues 341–360 is disordered; sequence EGSGAETAARPDDDRDEGRG. Residues 349-360 are compositionally biased toward basic and acidic residues; sequence ARPDDDRDEGRG.

The protein belongs to the transferase hexapeptide repeat family. LpxD subfamily. As to quaternary structure, homotrimer.

The catalysed reaction is a UDP-3-O-[(3R)-3-hydroxyacyl]-alpha-D-glucosamine + a (3R)-hydroxyacyl-[ACP] = a UDP-2-N,3-O-bis[(3R)-3-hydroxyacyl]-alpha-D-glucosamine + holo-[ACP] + H(+). The protein operates within bacterial outer membrane biogenesis; LPS lipid A biosynthesis. Catalyzes the N-acylation of UDP-3-O-acylglucosamine using 3-hydroxyacyl-ACP as the acyl donor. Is involved in the biosynthesis of lipid A, a phosphorylated glycolipid that anchors the lipopolysaccharide to the outer membrane of the cell. The protein is UDP-3-O-acylglucosamine N-acyltransferase of Rhodopseudomonas palustris (strain ATCC BAA-98 / CGA009).